The sequence spans 244 residues: Anti-H(O) lectin 1 (244 aa).

Residues Asn113 and Asn117 are each glycosylated (N-linked (GlcNAc...) asparagine). 2 residues coordinate Mn(2+): Glu127 and Asp129. Residues Asp129, Tyr131, Asn137, and Asp142 each coordinate Ca(2+). Residues Asp142 and His145 each coordinate Mn(2+).

Belongs to the leguminous lectin family. In terms of assembly, homotetramer.

Functionally, di-N-acetylchitobiose-binding anti-H(O) lectin. In Cytisophyllum sessilifolium (Sessile-leaved cytisus), this protein is Anti-H(O) lectin 1.